We begin with the raw amino-acid sequence, 199 residues long: 3-isopropylmalate dehydratase small subunit (199 aa).

This sequence belongs to the LeuD family. LeuD type 1 subfamily. In terms of assembly, heterodimer of LeuC and LeuD.

The enzyme catalyses (2R,3S)-3-isopropylmalate = (2S)-2-isopropylmalate. It participates in amino-acid biosynthesis; L-leucine biosynthesis; L-leucine from 3-methyl-2-oxobutanoate: step 2/4. In terms of biological role, catalyzes the isomerization between 2-isopropylmalate and 3-isopropylmalate, via the formation of 2-isopropylmaleate. This is 3-isopropylmalate dehydratase small subunit from Kocuria rhizophila (strain ATCC 9341 / DSM 348 / NBRC 103217 / DC2201).